The chain runs to 235 residues: Purine nucleoside phosphorylase DeoD-type (235 aa).

Histidine 4 contacts a purine D-ribonucleoside. Residues glycine 20, arginine 24, arginine 43, and 87-90 contribute to the phosphate site; that span reads RVGT. A purine D-ribonucleoside is bound by residues glutamate 162, 179 to 181, and 203 to 204; these read EME and SD. Aspartate 204 functions as the Proton donor in the catalytic mechanism.

It belongs to the PNP/UDP phosphorylase family. As to quaternary structure, homohexamer; trimer of homodimers.

It catalyses the reaction a purine D-ribonucleoside + phosphate = a purine nucleobase + alpha-D-ribose 1-phosphate. It carries out the reaction a purine 2'-deoxy-D-ribonucleoside + phosphate = a purine nucleobase + 2-deoxy-alpha-D-ribose 1-phosphate. Catalyzes the reversible phosphorolytic breakdown of the N-glycosidic bond in the beta-(deoxy)ribonucleoside molecules, with the formation of the corresponding free purine bases and pentose-1-phosphate. The protein is Purine nucleoside phosphorylase DeoD-type of Bacillus cereus (strain ZK / E33L).